The chain runs to 394 residues: Anhydro-N-acetylmuramic acid kinase (394 aa).

Residue 11-18 participates in ATP binding; that stretch reads GTSADGID.

This sequence belongs to the anhydro-N-acetylmuramic acid kinase family.

The enzyme catalyses 1,6-anhydro-N-acetyl-beta-muramate + ATP + H2O = N-acetyl-D-muramate 6-phosphate + ADP + H(+). It participates in amino-sugar metabolism; 1,6-anhydro-N-acetylmuramate degradation. The protein operates within cell wall biogenesis; peptidoglycan recycling. Functionally, catalyzes the specific phosphorylation of 1,6-anhydro-N-acetylmuramic acid (anhMurNAc) with the simultaneous cleavage of the 1,6-anhydro ring, generating MurNAc-6-P. Is required for the utilization of anhMurNAc either imported from the medium or derived from its own cell wall murein, and thus plays a role in cell wall recycling. The chain is Anhydro-N-acetylmuramic acid kinase from Deinococcus geothermalis (strain DSM 11300 / CIP 105573 / AG-3a).